The sequence spans 702 residues: 1,4-alpha-glucan-branching enzyme (702 aa).

A2 carries the N-acetylalanine modification. Substrate is bound by residues 62–63 (NE) and 91–93 (WAP). W107 lines the (1,4-alpha-D-glucosyl)n pocket. Residue 118 to 121 (DYGK) participates in substrate binding. A (1,4-alpha-D-glucosyl)n-binding site is contributed by K143. At Y173 the chain carries Phosphotyrosine. 333-336 (EILR) lines the substrate pocket. D357 functions as the Nucleophile in the catalytic mechanism. The Proton donor role is filled by E412.

It belongs to the glycosyl hydrolase 13 family. GlgB subfamily. Monomer.

The catalysed reaction is Transfers a segment of a (1-&gt;4)-alpha-D-glucan chain to a primary hydroxy group in a similar glucan chain.. It participates in glycan biosynthesis; glycogen biosynthesis. Its function is as follows. Glycogen-branching enzyme participates in the glycogen biosynthetic process along with glycogenin and glycogen synthase. Generates alpha-1,6-glucosidic branches from alpha-1,4-linked glucose chains, to increase solubility of the glycogen polymer. The polypeptide is 1,4-alpha-glucan-branching enzyme (GBE1) (Homo sapiens (Human)).